The chain runs to 256 residues: Adenylate kinase (256 aa).

49–54 (GAGKGT) contributes to the ATP binding site. The interval 69–98 (ATGDMLREQVQQKTPLGIEAKKIMDAGGLV) is NMP. AMP contacts are provided by residues Thr-70, Arg-75, 96–98 (GLV), 125–128 (GFPR), and Gln-132. Residues 166–203 (GRLVHPASGRSYHKEFNPPKKRNVDDVTGEPLIQRSDD) form an LID region. ATP is bound by residues Arg-167 and 176 to 177 (SY). Residues Arg-200 and Arg-211 each contribute to the AMP site. Gln-239 is a binding site for ATP.

The protein belongs to the adenylate kinase family. AK2 subfamily. Monomer.

It is found in the cytoplasm. The protein localises to the cytosol. The protein resides in the mitochondrion intermembrane space. The catalysed reaction is AMP + ATP = 2 ADP. Catalyzes the reversible transfer of the terminal phosphate group between ATP and AMP. Plays an important role in cellular energy homeostasis and in adenine nucleotide metabolism. Adenylate kinase activity is critical for regulation of the phosphate utilization and the AMP de novo biosynthesis pathways. This chain is Adenylate kinase, found in Laccaria bicolor (strain S238N-H82 / ATCC MYA-4686) (Bicoloured deceiver).